The chain runs to 229 residues: uncharacterized protein (229 aa).

The HTH cro/C1-type domain maps to 24-78; that stretch reads LRKWRSIFNASQSDLARKLGISPSVISDYESGRRKPGTAFLKKFVCALIELDGER. Positions 35-54 form a DNA-binding region, H-T-H motif; that stretch reads QSDLARKLGISPSVISDYES.

This is an uncharacterized protein from Archaeoglobus fulgidus (strain ATCC 49558 / DSM 4304 / JCM 9628 / NBRC 100126 / VC-16).